Reading from the N-terminus, the 180-residue chain is MLYDDFYVKSLIQTIEDWPKQGISFRDITPIFSDPKGMRMVVDAYVHRYIATDITHIACIDARGFLIAAVLAYELQKPLILVRKKGKLPGKTISQKYALEYGEAELEIQEGAVKAGDEVLLFDDLIATGGTLLAAIELLTSQGASIKEVAAIIDLPDLGGSQKLRDSDIPVFSLCAYDGE.

This sequence belongs to the purine/pyrimidine phosphoribosyltransferase family. In terms of assembly, homodimer.

It is found in the cytoplasm. The enzyme catalyses AMP + diphosphate = 5-phospho-alpha-D-ribose 1-diphosphate + adenine. It functions in the pathway purine metabolism; AMP biosynthesis via salvage pathway; AMP from adenine: step 1/1. In terms of biological role, catalyzes a salvage reaction resulting in the formation of AMP, that is energically less costly than de novo synthesis. This chain is Adenine phosphoribosyltransferase, found in Marinomonas sp. (strain MWYL1).